Consider the following 617-residue polypeptide: Vitamin B12 transporter BtuB (617 aa).

Residues methionine 1–alanine 22 form the signal peptide. A TonB box motif is present at residues glutamate 29–asparagine 36. One can recognise a TBDR plug domain in the interval glutamine 40–arginine 154. The TBDR beta-barrel domain occupies aspartate 159 to phenylalanine 617. The TonB C-terminal box motif lies at valine 600–phenylalanine 617.

Belongs to the TonB-dependent receptor family. BtuB (TC 1.B.14.3.1) subfamily.

It localises to the cell outer membrane. Functionally, involved in the active translocation of vitamin B12 (cyanocobalamin) across the outer membrane to the periplasmic space. It derives its energy for transport by interacting with the trans-periplasmic membrane protein TonB. The chain is Vitamin B12 transporter BtuB from Vibrio campbellii (strain ATCC BAA-1116).